Consider the following 432-residue polypeptide: MTNVVVVGSQWGDEGKGKIVDWLSERADIVVRFQGGHNAGHTLVIDGVSYKLSLLPSGVVRSGKLAVIGNGVVIDPHALIAEIDRLAAQGVTVTPQNLRIADNATLILSLHRELDGIREDAASNSGTKIGTTRRGIGPAYEDKVGRRAIRVMDLADLDTLPAKVDRLLTHHNALRRGLGEAEISHRAIMDELSSVAARVLPFMDTIWLLLDRERRKGARILFEGAQGTLLDIDHGTYPFVTSSNTVAGQAAAGSGMGPGSLGYILGITKAYTTRVGEGPFPTELDDEVGRFLGERGHEFGTVTGRKRRCGWFDAALVRQSVAANGITGIALTKLDVLDGLDELKICVGYTLDGQQIDHLPASQAQQALAKPVYITLEGWKESTVGARSWAELPAQAIKYVRQVEELIGAPVALLSTSPERDDTILVTDPFED.

GTP-binding positions include 12–18 (GDEGKGK) and 40–42 (GHT). Catalysis depends on D13, which acts as the Proton acceptor. 2 residues coordinate Mg(2+): D13 and G40. Residues 13 to 16 (DEGK), 38 to 41 (NAGH), T132, R146, Q226, T241, and R305 each bind IMP. The active-site Proton donor is the H41. 301 to 307 (TVTGRKR) serves as a coordination point for substrate. GTP contacts are provided by residues R307, 333–335 (KLD), and 415–417 (STS).

The protein belongs to the adenylosuccinate synthetase family. As to quaternary structure, homodimer. It depends on Mg(2+) as a cofactor.

The protein localises to the cytoplasm. It catalyses the reaction IMP + L-aspartate + GTP = N(6)-(1,2-dicarboxyethyl)-AMP + GDP + phosphate + 2 H(+). The protein operates within purine metabolism; AMP biosynthesis via de novo pathway; AMP from IMP: step 1/2. Functionally, plays an important role in the de novo pathway of purine nucleotide biosynthesis. Catalyzes the first committed step in the biosynthesis of AMP from IMP. The chain is Adenylosuccinate synthetase from Sinorhizobium medicae (strain WSM419) (Ensifer medicae).